A 375-amino-acid polypeptide reads, in one-letter code: Succinyl-diaminopimelate desuccinylase (375 aa).

Zn(2+) is bound at residue His-66. Asp-68 is a catalytic residue. A Zn(2+)-binding site is contributed by Asp-99. The active-site Proton acceptor is the Glu-133. Glu-134, Glu-162, and His-348 together coordinate Zn(2+).

Belongs to the peptidase M20A family. DapE subfamily. As to quaternary structure, homodimer. The cofactor is Zn(2+). Co(2+) is required as a cofactor.

It carries out the reaction N-succinyl-(2S,6S)-2,6-diaminopimelate + H2O = (2S,6S)-2,6-diaminopimelate + succinate. It functions in the pathway amino-acid biosynthesis; L-lysine biosynthesis via DAP pathway; LL-2,6-diaminopimelate from (S)-tetrahydrodipicolinate (succinylase route): step 3/3. Catalyzes the hydrolysis of N-succinyl-L,L-diaminopimelic acid (SDAP), forming succinate and LL-2,6-diaminopimelate (DAP), an intermediate involved in the bacterial biosynthesis of lysine and meso-diaminopimelic acid, an essential component of bacterial cell walls. The chain is Succinyl-diaminopimelate desuccinylase from Escherichia coli (strain SE11).